The sequence spans 274 residues: NH(3)-dependent NAD(+) synthetase (274 aa).

46–53 lines the ATP pocket; the sequence is GISGGQDS. Asp-52 contacts Mg(2+). Residue Arg-140 participates in deamido-NAD(+) binding. Thr-160 is a binding site for ATP. Glu-165 contributes to the Mg(2+) binding site. 2 residues coordinate deamido-NAD(+): Lys-173 and Asp-180. Residues Lys-189 and Thr-211 each coordinate ATP. 260–261 provides a ligand contact to deamido-NAD(+); the sequence is HK.

The protein belongs to the NAD synthetase family. As to quaternary structure, homodimer.

It catalyses the reaction deamido-NAD(+) + NH4(+) + ATP = AMP + diphosphate + NAD(+) + H(+). The protein operates within cofactor biosynthesis; NAD(+) biosynthesis; NAD(+) from deamido-NAD(+) (ammonia route): step 1/1. Catalyzes the ATP-dependent amidation of deamido-NAD to form NAD. Uses ammonia as a nitrogen source. This chain is NH(3)-dependent NAD(+) synthetase, found in Lysinibacillus sphaericus (strain C3-41).